The chain runs to 1133 residues: Error-prone DNA polymerase (1133 aa).

This sequence belongs to the DNA polymerase type-C family. DnaE2 subfamily.

Its subcellular location is the cytoplasm. The enzyme catalyses DNA(n) + a 2'-deoxyribonucleoside 5'-triphosphate = DNA(n+1) + diphosphate. Functionally, DNA polymerase involved in damage-induced mutagenesis and translesion synthesis (TLS). It is not the major replicative DNA polymerase. The sequence is that of Error-prone DNA polymerase from Anaeromyxobacter sp. (strain K).